The following is a 464-amino-acid chain: Lysosomal dipeptide transporter MFSD1 (464 aa).

Positions 11 to 12 match the Dileucine internalization motif motif; sequence LL. Position 20 is a phosphoserine (serine 20). The next 12 membrane-spanning stretches (helical) occupy residues 38 to 58, 82 to 102, 112 to 132, 134 to 154, 190 to 210, 214 to 234, 265 to 285, 303 to 323, 330 to 350, 360 to 380, 391 to 411, and 417 to 437; these read LAHRLVVLSLMCFLGFGSYFC, LLYAWYSWPNVVLCFLGGFLI, TVIFSCFVCIGQVIFALGGIF, AFWLMELGRFVFGIGGESLAV, LMGWLYGKIEALLGSAGHMTL, LMIGCITCIFSLICALALAYL, LILVFVICVCYYVAVFPFIGL, AINSIVYIISAPMSPLFGLLV, IIWVLYAVAATLVSHMMLAFT, LLGFSYSLLACALWPMVAFIV, FMQSIQNLGLAVIAILAGMIL, and LLLEVFFIACVSLSLLAVVCL.

It belongs to the major facilitator superfamily. As to quaternary structure, homodimer. Interacts with lysosomal protein GLMP (via lumenal domain); the interaction starts while both proteins are still in the endoplasmic reticulum and is required for stabilization of MFSD1 in lysosomes but has no direct effect on its targeting to lysosomes or transporter activity. In terms of processing, not N-glycosylated. In terms of tissue distribution, in brain, expressed in the cortex, striatum hippocampus, hypothalamus, thalamus and brainstem (at protein level). Widely expressed with highest levels in kidney and spleen (at protein level).

The protein localises to the lysosome membrane. The enzyme catalyses L-alpha-aminoacyl-L-arginine(out) = L-alpha-aminoacyl-L-arginine(in). It carries out the reaction L-arginyl-L-alpha-amino acid(out) = L-arginyl-L-alpha-amino acid(in). It catalyses the reaction L-arginyl-glycine(out) = L-arginyl-glycine(in). The catalysed reaction is L-alpha-aminoacyl-L-lysine(out) = L-alpha-aminoacyl-L-lysine(in). The enzyme catalyses L-aspartyl-L-lysine(out) = L-aspartyl-L-lysine(in). It carries out the reaction L-alanyl-L-lysine(out) = L-alanyl-L-lysine(in). It catalyses the reaction L-lysyl-L-alpha-amino acid(out) = L-lysyl-L-alpha-amino acid(in). The catalysed reaction is L-lysyl-L-alanine(out) = L-lysyl-L-alanine(in). The enzyme catalyses L-lysyl-L-lysine(out) = L-lysyl-L-lysine(in). It carries out the reaction L-lysyl-glycine(out) = L-lysyl-glycine(in). It catalyses the reaction L-alpha-aminoacyl-L-histidine(out) = L-alpha-aminoacyl-L-histidine(in). The catalysed reaction is L-histidyl-L-alpha-amino acid(out) = L-histidyl-L-alpha-amino acid(in). The enzyme catalyses L-histidyl-glycine(out) = L-histidyl-glycine(in). Functionally, lysosomal dipeptide uniporter that selectively exports lysine, arginine or histidine-containing dipeptides with a net positive charge from the lysosome lumen into the cytosol. Could play a role in a specific type of protein O-glycosylation indirectly regulating macrophages migration and tissue invasion. Also essential for liver homeostasis. This is Lysosomal dipeptide transporter MFSD1 from Mus musculus (Mouse).